Here is a 201-residue protein sequence, read N- to C-terminus: 3-isopropylmalate dehydratase small subunit (201 aa).

Belongs to the LeuD family. LeuD type 1 subfamily. As to quaternary structure, heterodimer of LeuC and LeuD.

It catalyses the reaction (2R,3S)-3-isopropylmalate = (2S)-2-isopropylmalate. The protein operates within amino-acid biosynthesis; L-leucine biosynthesis; L-leucine from 3-methyl-2-oxobutanoate: step 2/4. In terms of biological role, catalyzes the isomerization between 2-isopropylmalate and 3-isopropylmalate, via the formation of 2-isopropylmaleate. In Escherichia coli O157:H7, this protein is 3-isopropylmalate dehydratase small subunit.